The following is an 87-amino-acid chain: Small ribosomal subunit protein bS16 (87 aa).

Belongs to the bacterial ribosomal protein bS16 family.

The chain is Small ribosomal subunit protein bS16 from Psychrobacter sp. (strain PRwf-1).